A 725-amino-acid chain; its full sequence is IML2-like protein YKR018C (725 aa).

Residue threonine 196 is modified to Phosphothreonine. Phosphoserine is present on residues serine 246, serine 377, and serine 380.

The protein belongs to the IML2 family.

Its subcellular location is the cytoplasm. The protein localises to the nucleus. The polypeptide is IML2-like protein YKR018C (Saccharomyces cerevisiae (strain ATCC 204508 / S288c) (Baker's yeast)).